We begin with the raw amino-acid sequence, 578 residues long: MNLHTLLLNKFRTALVAIGAPENSPAPLSRATKVGFGDYQFNGAMALAKVLKQKPRDIAEKIVEAVELDGIAEKLEVAGPGFINIYLSKEWLAAQLSHAAADPRLNIESQPTKTVVVDYSSPNLAKEMHVGHLRTTIIGDAVVKALEFMGHKVIRQNHMGDWGTQFGMLLAHLNDKLESNQVAETALSDLEDFYREAKVRFDEEEGFADRAREYVVKLQGGDSHCLALWQNFIDVSITHSEEVYHKLNVSLTRDDIMGESAYNHDLANVVSELQAKGLAVESQGAQVVFLPELADKEGNPAAYIVQKSGGGYLYATTDLAAIRHRNKQLHADRTLILTDARQALHFKQTELVARKAGFIEPEQTYEHCPFGMMLGNDGRPFKTRTGGTVKLVELLDEAVERAETLLSKRETDLSSDELKVLANKIGIGAVKYADLSKNRTTDYMFSWDSMLSFEGNTAPYLQYAYTRVMSIFRKAGVDHQTLNAPISLDAPQEKILAVKQLQYVEAINQVIAEGTPHVLCTYLYELASLFMSFYEACPMLKDGIEQDVRDSRMTLAALTAKTLQSGLSLLGIDTMERM.

The short motif at 122–132 (PNLAKEMHVGH) is the 'HIGH' region element.

It belongs to the class-I aminoacyl-tRNA synthetase family. In terms of assembly, monomer.

It localises to the cytoplasm. The catalysed reaction is tRNA(Arg) + L-arginine + ATP = L-arginyl-tRNA(Arg) + AMP + diphosphate. The protein is Arginine--tRNA ligase of Pseudoalteromonas atlantica (strain T6c / ATCC BAA-1087).